The following is a 453-amino-acid chain: Odorant receptor 83a (453 aa).

The Cytoplasmic segment spans residues 1-28 (MKSTFKEERIKDDSKRRDLFVFVRQTMC). The helical transmembrane segment at 29–49 (IAAMYPFGYYVNGSGVLAVLV) threads the bilayer. Topologically, residues 50-85 (RFCDLTYELFNYFVSVHIAGLYICTIYINYGQGDLD) are extracellular. The chain crosses the membrane as a helical span at residues 86–106 (FFVNCLIQTIIYLWTIAMKLY). Residues 107–148 (FRRFRPGLLNTILSNINDEYETRSAVGFSFVTMAGSYRMSKL) lie on the Cytoplasmic side of the membrane. A helical transmembrane segment spans residues 149 to 169 (WIKTYVYCCYIGTIFWLALPI). The Extracellular portion of the chain corresponds to 170–203 (AYRDRSLPLACWYPFDYTQPGVYEVVFLLQAMGQ). The chain crosses the membrane as a helical span at residues 204–224 (IQVAASFASSSGLHMVLCVLI). The Cytoplasmic segment spans residues 225-322 (SGQYDVLFCS…ALKKIESFYS (98 aa)). A helical membrane pass occupies residues 323 to 343 (PIWFVKIGEVTFLMCLVAFVS). Residues 344-359 (TKSTAANSFMRMVSLG) are Extracellular-facing. Residues 360–380 (QYLLLVLYELFIICYFADIVF) traverse the membrane as a helical segment. The Cytoplasmic segment spans residues 381-408 (QNSQRCGEALWRSPWQRHLKDVRSDYMF). A helical transmembrane segment spans residues 409–429 (FMLNSRRQFQLTAGKISNLNV). The Extracellular segment spans residues 430 to 453 (DRFRGTITTAFSFLTLLQKMDARE).

This sequence belongs to the insect chemoreceptor superfamily. Heteromeric odorant receptor channel (TC 1.A.69) family. Or2a subfamily. Interacts with Orco. Complexes exist early in the endomembrane system in olfactory sensory neurons (OSNs), coupling these complexes to the conserved ciliary trafficking pathway.

The protein resides in the cell membrane. Its function is as follows. Odorant receptor which mediates acceptance or avoidance behavior, depending on its substrates. The odorant receptor repertoire encodes a large collection of odor stimuli that vary widely in identity, intensity, and duration. May form a complex with Orco to form odorant-sensing units, providing sensitive and prolonged odorant signaling and calcium permeability. Involved in the behavioral responses to pentanol, ethyl acetate, and propyl acetate. The polypeptide is Odorant receptor 83a (Or83a) (Drosophila melanogaster (Fruit fly)).